The sequence spans 661 residues: 3-hydroxypropionyl-coenzyme A synthetase (661 aa).

Residue Asp-526 is part of the active site. At Lys-617 the chain carries N6-acetyllysine.

Belongs to the ATP-dependent AMP-binding enzyme family. As to quaternary structure, homotetramer.

The catalysed reaction is 3-hydroxypropanoate + ATP + CoA = 3-hydroxypropanoyl-CoA + AMP + diphosphate. In terms of biological role, plays a role in the autotrophic CO(2) fixation pathway. Activates 3-hydroxypropionate to its CoA ester. Can also activate propionate, and to a lesser extent acrylate, acetate and butyrate. This chain is 3-hydroxypropionyl-coenzyme A synthetase, found in Metallosphaera sedula (strain ATCC 51363 / DSM 5348 / JCM 9185 / NBRC 15509 / TH2).